Here is an 804-residue protein sequence, read N- to C-terminus: Endoplasmin (804 aa).

The N-terminal stretch at 1–21 (MRALWVLGLCCVLLTFGSVRA) is a signal peptide. The SRT pseudosubstrate motif motif lies at 42 to 44 (SRT). N62 carries an N-linked (GlcNAc...) asparagine glycan. S64 bears the Phosphoserine mark. N-linked (GlcNAc...) asparagine glycosylation is present at N107. ATP-binding residues include N107, D149, and N162. Position 168 is an N6-(2-hydroxyisobutyryl)lysine (K168). The residue at position 172 (S172) is a Phosphoserine. An ATP-binding site is contributed by F199. An N-linked (GlcNAc...) asparagine glycan is attached at N217. T288 carries the post-translational modification Phosphothreonine; by CK2. The tract at residues 288–323 (TVEEPMEEEEAAKEEKEDSDDEAAVEEEEEEKKPKT) is disordered. The segment covering 289–317 (VEEPMEEEEAAKEEKEDSDDEAAVEEEEE) has biased composition (acidic residues). S306 bears the Phosphoserine; by CK2 mark. The residue at position 403 (S403) is a Phosphoserine. Residue K404 is modified to N6-succinyllysine. N-linked (GlcNAc...) asparagine glycosylation is present at N445. S447 is modified (phosphoserine). Position 479 is an N6-acetyllysine (K479). 2 N-linked (GlcNAc...) asparagine glycosylation sites follow: N481 and N502. Residue K633 is modified to N6-succinyllysine. Residues 750-804 (DPDAKVEEEPEEEPEETTEDTTEDTEQDDEEEMDAGTDDEEQETVKKSTAEKDEL) are disordered. Residues 757 to 791 (EEPEEEPEETTEDTTEDTEQDDEEEMDAGTDDEEQ) show a composition bias toward acidic residues. A phosphothreonine; by CK2 mark is found at T766, T770, T774, and T786. The segment covering 792–804 (ETVKKSTAEKDEL) has biased composition (basic and acidic residues). Positions 801–804 (KDEL) match the Prevents secretion from ER motif.

It belongs to the heat shock protein 90 family. In terms of assembly, homodimer; disulfide-linked. Component of an EIF2 complex at least composed of CELF1/CUGBP1, CALR, CALR3, EIF2S1, EIF2S2, HSP90B1 and HSPA5. Part of a large chaperone multiprotein complex comprising DNAJB11, HSP90B1, HSPA5, HYOU, PDIA2, PDIA4, PDIA6, PPIB, SDF2L1, UGGT1 and very small amounts of ERP29, but not, or at very low levels, CALR nor CANX. Interacts with AIMP1; regulates its retention in the endoplasmic reticulum. Hyperglycosylated form interacts with OS9; promoting its degradation by the endoplasmic reticulum associated degradation (ERAD). Interacts with CNPY3. This interaction is disrupted in the presence of ATP. Interacts with TLR4 and TLR9, but not with TLR3. Interacts with MZB1 in a calcium-dependent manner. Interacts with METTL23. Interacts with IL1B; the interaction facilitates cargo translocation into the ERGIC. Interacts with EIF2AK3. In terms of processing, phosphorylated by CK2. Post-translationally, N-glycosylated cotranslationally at Asn-217 by STT3A-containing OST-A complex: this glycosylation is constitutive. In response to various stress, 5 additional facultative sites (Asn-62, Asn-107, Asn-445, Asn-481 and Asn-502) can be glycosylated post-translationally by STT3B-containing OST-B complex, leading to a hyperglycosylated form that is degraded by the ER-associated degradation (ERAD) pathway. In normal conditions, the OST-A complex together with CCDC134 prevent glycosylation at facultative sites during protein folding, thereby preventing hyperglycosylation. Mechanistically, nascent HSP90B1 is tethered during translation to a specialized CCDC134-containing translocon that forms a microenvironment for its folding, in which STT3A associates with the SRT pseudosubstrate motif, and prevents access to facultative glycosylation sites until folding is completed, rendering its facultative sites inaccessible to the OST-B complex. As to expression, detected in heart muscle (at protein level).

The protein localises to the endoplasmic reticulum lumen. It localises to the sarcoplasmic reticulum lumen. It is found in the melanosome. The enzyme catalyses ATP + H2O = ADP + phosphate + H(+). Its function is as follows. ATP-dependent chaperone involved in the processing of proteins in the endoplasmic reticulum, regulating their transport. Together with MESD, acts as a modulator of the Wnt pathway by promoting the folding of LRP6, a coreceptor of the canonical Wnt pathway. When associated with CNPY3, required for proper folding of Toll-like receptors. Promotes folding and trafficking of TLR4 to the cell surface. May participate in the unfolding of cytosolic leaderless cargos (lacking the secretion signal sequence) such as the interleukin 1/IL-1 to facilitate their translocation into the ERGIC (endoplasmic reticulum-Golgi intermediate compartment) and secretion; the translocation process is mediated by the cargo receptor TMED10. May also function in endoplasmic reticulum associated degradation (ERAD); it is however unclear whether it participates to ERAD or is a target of ERAD. This chain is Endoplasmin (HSP90B1), found in Canis lupus familiaris (Dog).